We begin with the raw amino-acid sequence, 423 residues long: Tubulin beta-2 chain (423 aa).

GTP is bound by residues E44, S113, G117, T118, G119, N179, and N201. Position 44 (E44) interacts with Mg(2+). The segment at 394–423 is disordered; it reads VSEYQQYQDATAEEEGEYDEDEDDEGGDYA. Residues 404–423 are compositionally biased toward acidic residues; sequence TAEEEGEYDEDEDDEGGDYA.

It belongs to the tubulin family. As to quaternary structure, dimer of alpha and beta chains. A typical microtubule is a hollow water-filled tube with an outer diameter of 25 nm and an inner diameter of 15 nM. Alpha-beta heterodimers associate head-to-tail to form protofilaments running lengthwise along the microtubule wall with the beta-tubulin subunit facing the microtubule plus end conferring a structural polarity. Microtubules usually have 13 protofilaments but different protofilament numbers can be found in some organisms and specialized cells. Mg(2+) is required as a cofactor.

The protein resides in the cytoplasm. Its subcellular location is the cytoskeleton. Tubulin is the major constituent of microtubules, a cylinder consisting of laterally associated linear protofilaments composed of alpha- and beta-tubulin heterodimers. Microtubules grow by the addition of GTP-tubulin dimers to the microtubule end, where a stabilizing cap forms. Below the cap, tubulin dimers are in GDP-bound state, owing to GTPase activity of alpha-tubulin. The sequence is that of Tubulin beta-2 chain (TUBB2) from Oomycete-like sp. (strain MacKay2000).